Consider the following 926-residue polypeptide: Up-regulator of cell proliferation (926 aa).

S3 bears the Phosphoserine mark. In terms of domain architecture, VLIG-type G spans 689 to 924 (RSRLVVLSAL…NIQQLIELLR (236 aa)).

Belongs to the TRAFAC class dynamin-like GTPase superfamily. Very large inducible GTPase (VLIG) family.

It localises to the cytoplasm. The protein localises to the nucleus. Functionally, may be involved in cell cycle progression through the regulation of cyclin D1 expression. In Mus musculus (Mouse), this protein is Up-regulator of cell proliferation (Urgcp).